The chain runs to 481 residues: UDP-N-acetylmuramate--L-alanine ligase (481 aa).

Residue 135-141 (GTHGKTT) coordinates ATP.

This sequence belongs to the MurCDEF family.

It is found in the cytoplasm. It carries out the reaction UDP-N-acetyl-alpha-D-muramate + L-alanine + ATP = UDP-N-acetyl-alpha-D-muramoyl-L-alanine + ADP + phosphate + H(+). It functions in the pathway cell wall biogenesis; peptidoglycan biosynthesis. Functionally, cell wall formation. The sequence is that of UDP-N-acetylmuramate--L-alanine ligase from Nostoc punctiforme (strain ATCC 29133 / PCC 73102).